The primary structure comprises 7126 residues: Replicase polyprotein 1ab (7126 aa).

Positions 25–151 (RSDHVACTVP…EHTFLLRKNG (127 aa)) constitute a CoV Nsp1 globular domain. The BetaCoV Nsp1 C-terminal domain occupies 167 to 195 (TPYVEILDDLEADPTGKYSQNLLKKLIGG). Residues 197-472 (CIPVDQYMCG…WDKVVETANL (276 aa)) form the CoV Nsp2 N-terminal domain. Residues cysteine 339, cysteine 342, cysteine 358, and cysteine 360 each coordinate Zn(2+). Positions 339–360 (CNACGRGTWCTGNAIQGFACDC) are C4. The region spanning 478 to 712 (QHSLNFCQQF…LDIMSKAMKL (235 aa)) is the CoV Nsp2 middle domain. The region spanning 714–847 (HTNVSWAGTK…VSTLFRLKGG (134 aa)) is the CoV Nsp2 C-terminal domain. A Ubiquitin-like 1 domain is found at 851–960 (KKVTFGDVNT…MTFSINPVED (110 aa)). The tract at residues 1039 to 1061 (AQEPSVESTDSTPSTSTVVSEND) is disordered. Over residues 1041-1059 (EPSVESTDSTPSTSTVVSE) the composition is skewed to low complexity. 2 consecutive Macro domains span residues 1159–1328 (DLSK…KPDG) and 1329–1453 (LVYS…AIQT). Residues 1453–1526 (TPETAFINNV…LEACRAYLTS (74 aa)) form the DPUP domain. A Ubiquitin-like 2 domain is found at 1531-1586 (QVNIEVLVTIDGVNFRTVILNDATTFRKQLGATFYKGVDISDALPTVKMGGESLFV). The 272-residue stretch at 1600-1871 (EYYGTSDVTF…KVEVNPDLSN (272 aa)) folds into the Peptidase C16 domain. Cysteine 1641 acts as the For PL-PRO activity in catalysis. Zn(2+)-binding residues include cysteine 1721, cysteine 1724, cysteine 1756, and cysteine 1758. Residues 1721-1758 (CTVCGIRDIEYTGMRACVYAGVNSMEELQSVFNETCVC) form a C4-type zinc finger. Catalysis depends on for PL-PRO activity residues histidine 1807 and aspartate 1822. A Nucleic acid-binding domain is found at 1885–2002 (TIKYSPATIL…QLYDVAPIVL (118 aa)). Residues 2019–2140 (PNVPVVEDVS…AKITVTATTA (122 aa)) form the G2M domain. The next 3 helical transmembrane spans lie at 2119–2139 (VLLGASSLFASFAKITVTATT), 2152–2172 (FVVNYGVLQNMFLFLKMLFFL), and 2229–2249 (LFLLLCTTILLLSSIYHLVIF). Positions 2119–2402 (VLLGASSLFA…VTHIPLHGLV (284 aa)) are HD1. The 3Ecto domain maps to 2266 to 2332 (LAMYKEVRSY…LQMLQTHITS (67 aa)). 2 disulfide bridges follow: cysteine 2282-cysteine 2310 and cysteine 2300-cysteine 2307. The next 3 membrane-spanning stretches (helical) occupy residues 2333-2353 (YVLNIDWIWFALEFFLAYVLY), 2357-2377 (FNVLLLVVTAQYFFAYTSAFV), and 2382-2402 (YNYIVSGLFFLVTHIPLHGLV). A Y1 region spans residues 2416–2506 (KFYSHVINGC…TLRRLIKPTD (91 aa)). The CoV Nsp3 Y domain maps to 2416–2789 (KFYSHVINGC…LSVKFSATKI (374 aa)). Residues histidine 2420, cysteine 2425, cysteine 2430, cysteine 2433, cysteine 2466, histidine 2469, cysteine 2473, and cysteine 2476 each contribute to the Zn(2+) site. Positions 2420 to 2433 (HVINGCKDTACLLC) are ZF1. The interval 2466–2476 (CCKHNWNCVEC) is ZF2. The tract at residues 2507–2605 (QSHYYVDSVV…LVDVNLVTTV (99 aa)) is Y2. The tract at residues 2507-2789 (QSHYYVDSVV…LSVKFSATKI (283 aa)) is coV-Y. The interval 2606 to 2688 (GDSREIAIKM…DALQYAHKND (83 aa)) is Y3. The Y4 stretch occupies residues 2689-2789 (IQLTTECYNN…LSVKFSATKI (101 aa)). 4 consecutive transmembrane segments (helical) span residues 2807-2827 (GYCILTLFVFTVAVLSWFCLP), 3079-3099 (STSLAMGLVLCVFLTAAFYYI), 3112-3132 (CAVVAVVAALLNSLCLCFIVA), and 3156-3176 (AFIMHISWYVMFGTVVPIWML). Residues 2807 to 3176 (GYCILTLFVF…FGTVVPIWML (370 aa)) are HD2. One can recognise a Nsp4C domain in the interval 3202-3298 (VFTDGKLNCS…NCSVTSSVLQ (97 aa)). Residues 3299-3604 (SGLVKMSAPS…NMQVMGVVMQ (306 aa)) enclose the Peptidase C30 domain. Residues histidine 3339 and cysteine 3446 each act as for 3CL-PRO activity in the active site. Transmembrane regions (helical) follow at residues 3610–3630 (ISYGFMHWLMSTLVLAYVSVM), 3644–3664 (TIPTQMTPLLFGFMACVMFTV), 3669–3689 (TFLSLFLLPVALCLTYANIVY), 3714–3734 (RTTHLDFGLYISLSFVLAIIV), 3742–3762 (MSNLALALCSGVMWFYTYVIG), 3791–3811 (LAKFISGLVFLYAPHLGFILP), and 3815–3835 (LVLLIYLCLGYMCTMYFGVFS). The HD3 stretch occupies residues 3610–3835 (ISYGFMHWLM…MCTMYFGVFS (226 aa)). In terms of domain architecture, RdRp Nsp7 cofactor spans 3897–3979 (SKLTDLKCTS…DLFENSSVLQ (83 aa)). Positions 3980-4178 (ATLTEFSHLA…RASSSAVKLQ (199 aa)) constitute a RdRp Nsp8 cofactor domain. Positions 4179-4288 (NNEIHPKGLK…GHIAATVRLQ (110 aa)) constitute a Nsp9 ssRNA-binding domain. Residues 4289-4427 (AGANTEFASN…DALRNNTVPQ (139 aa)) enclose the ExoN/MTase coactivator domain. Residues cysteine 4362, cysteine 4365, histidine 4371, cysteine 4378, cysteine 4404, cysteine 4407, cysteine 4415, and cysteine 4417 each coordinate Zn(2+). Zinc fingers lie at residues 4362–4378 (CLYCRAHIEHPDVSGVC) and 4404–4417 (CNVCQYWVGYGCNC). The region spanning 4433–4690 (FLNRVRGSSV…AAETHKDCDF (258 aa)) is the NiRAN domain. Mn(2+)-binding residues include asparagine 4638 and aspartate 4647. The Nsp12 Interface domain occupies 4695-4793 (IEWLLLEYDY…MNMDVNIHRH (99 aa)). Positions 4724, 4730, 4735, 4739, and 4916 each coordinate Zn(2+). One can recognise a Nsp12 RNA-dependent RNA polymerase domain in the interval 4794-5361 (RLALKELMMY…DLYSSPTTLQ (568 aa)). The segment at 4796-5010 (ALKELMMYAA…HQKMLKSMAA (215 aa)) is rdRp Fingers N-ter. The segment at 5011–5049 (TRGATCVIGTTKFYGGWDFMLKTLYKDVESPHLMGWDYP) is rdRp Palm N-ter. Residues 5041-5203 (PHLMGWDYPK…CYNSDYAAKG (163 aa)) enclose the RdRp catalytic domain. Residues 5050–5108 (KCDRAMPNMCRILASLILARKHSTCCTNSDRFYRLANECAQVLSEYVLCGGGYYVKPGG) form a rdRp Fingers C-ter region. The Zn(2+) site is built by histidine 5071, cysteine 5074, and cysteine 5075. Positions 5109-5244 (TSSGDATTAY…EKGPHEFCSQ (136 aa)) are rdRp Palm C-ter. Active-site residues include serine 5188, aspartate 5189, and aspartate 5190. The segment at 5245–5361 (HTLYIKDGDD…DLYSSPTTLQ (117 aa)) is rdRp Thumb. Positions 5362-5474 (AVGSCVVCHS…MEFNRLATCD (113 aa)) constitute a CV ZBD domain. Residues cysteine 5366, cysteine 5369, cysteine 5377, cysteine 5380, cysteine 5387, cysteine 5390, histidine 5394, histidine 5400, cysteine 5411, cysteine 5416, cysteine 5433, and histidine 5436 each coordinate Zn(2+). A (+)RNA virus helicase ATP-binding domain is found at 5618–5799 (TVPEEFANHV…MCNLGPDIFL (182 aa)). 5643–5650 (GPPGTGKS) is an ATP binding site. One can recognise a (+)RNA virus helicase C-terminal domain in the interval 5800–5974 (SVCYRCPKEI…GLFKDCSRED (175 aa)). The ExoN domain maps to 6031–6246 (LFITRDEAIR…RCLAIYDCFI (216 aa)). Residues aspartate 6049, glutamate 6051, and glutamate 6150 contribute to the active site. Residues cysteine 6166, cysteine 6169, cysteine 6185, histidine 6188, histidine 6216, cysteine 6220, and histidine 6223 each contribute to the Zn(2+) site. Catalysis depends on residues histidine 6227 and aspartate 6232. Residue cysteine 6238 participates in Zn(2+) binding. Residues 6255 to 6482 (YPYISHEQKL…NLWSTFVKVQ (228 aa)) form the N7-MTase domain. 6290 to 6296 (DIGNPKG) contacts S-adenosyl-L-methionine. The interval 6368 to 6382 (CNGGSLYVNKHAFHT) is gpppA-binding. Positions 6406, 6428, 6439, and 6442 each coordinate Zn(2+). One can recognise a Nsp15 N-terminal oligomerization domain in the interval 6483–6543 (GLENIAFNVI…NVAFELYAKR (61 aa)). Positions 6544-6665 (AVRSHPDLNL…LYKKVNNEFV (122 aa)) constitute an AV-Nsp11N/CoV-Nsp15M domain. The region spanning 6682–6821 (TALTPMEEDF…KDGKVQTFYP (140 aa)) is the NendoU domain. Active-site residues include histidine 6712, histidine 6727, lysine 6767, lysine 6870, aspartate 6954, lysine 6994, and glutamate 7027. The region spanning 6826–7120 (TNDWKPGLTM…TLNVSTDVLV (295 aa)) is the Nidovirus-type SAM-dependent 2'-O-MTase domain.

Belongs to the coronaviruses polyprotein 1ab family. As to quaternary structure, interacts with host PHB and PHB2. In terms of assembly, interacts with papain-like protease nsp3 and non-structural protein 6. Monomer. Homodimer. Only the homodimer shows catalytic activity. As to quaternary structure, interacts with nsp8 and nsp12 to form the replication-transcription complex (RTC): nsp12, nsp7, two subunits of nsp8, and up to two subunits of nsp13. In terms of assembly, interacts with nsp7, nsp13 and nsp12 to form the replication-transcription complex (RTC): nsp12, nsp7, two subunits of nsp8, and up to two subunits of nsp13. Interacts with nsp12. As to quaternary structure, interacts with proofreading exoribonuclease nsp14 and 2'-O-methyltransferase nsp16; these interactions enhance nsp14 and nsp16 enzymatic activities. In terms of assembly, interacts with nsp7 and nsp8 to form the replication-transcription complex (RTC): nsp12, nsp7, two subunits of nsp8, and up to two subunits of nsp13. Interacts with nsp9. Interacts with nsp8 to form the replication-transcription complex (RTC): nsp12, nsp7, two subunits of nsp8, and up to two subunits of nsp13. The cofactor is Mn(2+). Mg(2+) is required as a cofactor. In terms of processing, specific enzymatic cleavages in vivo by its own proteases yield mature proteins. 3CL-PRO and PL-PRO proteinases are autocatalytically processed.

The protein localises to the host membrane. The protein resides in the host cytoplasm. Its subcellular location is the host perinuclear region. It is found in the host endoplasmic reticulum-Golgi intermediate compartment. The enzyme catalyses ATP + H2O = ADP + phosphate + H(+). The catalysed reaction is RNA(n) + a ribonucleoside 5'-triphosphate = RNA(n+1) + diphosphate. It carries out the reaction Thiol-dependent hydrolysis of ester, thioester, amide, peptide and isopeptide bonds formed by the C-terminal Gly of ubiquitin (a 76-residue protein attached to proteins as an intracellular targeting signal).. It catalyses the reaction a 5'-end (N(7)-methyl 5'-triphosphoguanosine)-ribonucleoside in mRNA + S-adenosyl-L-methionine = a 5'-end (N(7)-methyl 5'-triphosphoguanosine)-(2'-O-methyl-ribonucleoside) in mRNA + S-adenosyl-L-homocysteine + H(+). The enzyme catalyses uridylyl-uridylyl-ribonucleotide-RNA = a 3'-end uridylyl-2',3'-cyclophospho-uridine-RNA + a 5'-end dephospho-ribonucleoside-RNA. The catalysed reaction is a 5'-end diphospho-ribonucleoside in mRNA + GTP + H(+) = a 5'-end (5'-triphosphoguanosine)-ribonucleoside in mRNA + diphosphate. It carries out the reaction a 5'-end (5'-triphosphoguanosine)-ribonucleoside in mRNA + S-adenosyl-L-methionine = a 5'-end (N(7)-methyl 5'-triphosphoguanosine)-ribonucleoside in mRNA + S-adenosyl-L-homocysteine. Its function is as follows. The replicase polyprotein of coronaviruses is a multifunctional protein: it contains the activities necessary for the transcription of negative stranded RNA, leader RNA, subgenomic mRNAs and progeny virion RNA as well as proteinases responsible for the cleavage of the polyprotein into functional products. Functionally, inhibits host translation by interacting with the 40S ribosomal subunit. The nsp1-40S ribosome complex further induces an endonucleolytic cleavage near the 5'UTR of host mRNAs, targeting them for degradation. Viral mRNAs are not susceptible to nsp1-mediated endonucleolytic RNA cleavage thanks to the presence of a 5'-end leader sequence and are therefore protected from degradation. By suppressing host gene expression, nsp1 facilitates efficient viral gene expression in infected cells and evasion from host immune response. In terms of biological role, may play a role in the modulation of host cell survival signaling pathway by interacting with host PHB and PHB2. Indeed, these two proteins play a role in maintaining the functional integrity of the mitochondria and protecting cells from various stresses. Responsible for the cleavages located at the N-terminus of the replicase polyprotein. In addition, PL-PRO possesses a deubiquitinating/deISGylating activity and processes both 'Lys-48'- and 'Lys-63'-linked polyubiquitin chains from cellular substrates. Participates together with nsp4 in the assembly of virally-induced cytoplasmic double-membrane vesicles necessary for viral replication. Antagonizes innate immune induction of type I interferon by blocking the phosphorylation, dimerization and subsequent nuclear translocation of host IRF3. Also prevents host NF-kappa-B signaling. Its function is as follows. Participates in the assembly of virally-induced cytoplasmic double-membrane vesicles necessary for viral replication. Functionally, cleaves the C-terminus of replicase polyprotein at 11 sites. Recognizes substrates containing the core sequence [ILMVF]-Q-|-[SGACN]. Also able to bind an ADP-ribose-1''-phosphate (ADRP). In terms of biological role, plays a role in the initial induction of autophagosomes from host endoplasmic reticulum. Later, limits the expansion of these phagosomes that are no longer able to deliver viral components to lysosomes. Forms a hexadecamer with nsp8 (8 subunits of each) that may participate in viral replication by acting as a primase. Alternatively, may synthesize substantially longer products than oligonucleotide primers. Its function is as follows. Forms a hexadecamer with nsp7 (8 subunits of each) that may participate in viral replication by acting as a primase. Alternatively, may synthesize substantially longer products than oligonucleotide primers. Functionally, forms a primer, NSP9-pU, which is utilized by the polymerase for the initiation of RNA chains. Interacts with ribosome signal recognition particle RNA (SRP). Together with NSP8, suppress protein integration into the cell membrane, thereby disrupting host immune defenses. In terms of biological role, plays a pivotal role in viral transcription by stimulating both nsp14 3'-5' exoribonuclease and nsp16 2'-O-methyltransferase activities. Therefore plays an essential role in viral mRNAs cap methylation. RNA-directed RNA polymerase that catalyzes the transcription of viral genomic and subgenomic RNAs. Acts in complex with nsp7 and nsp8 to transcribe both the minus and positive strands of genomic RNA. The kinase-like NiRAN domain of NSP12 attaches one or more nucleotides to the amino terminus of NSP9, forming a covalent RNA-protein intermediate that serves as transcription/replication primer. Subgenomic RNAs (sgRNAs) are formed by discontinuous transcription: The polymerase has the ability to pause at transcription-regulating sequences (TRS) and jump to the leader TRS, resulting in a major deletion. This creates a series of subgenomic RNAs that are replicated, transcribed and translated. In addition, Nsp12 is a subunit of the viral RNA capping enzyme that catalyzes the RNA guanylyltransferase reaction for genomic and sub-genomic RNAs. Subsequently, the NiRAN domain transfers RNA to GDP, and forms the core cap structure GpppA-RNA. Its function is as follows. Multi-functional protein with a zinc-binding domain in N-terminus displaying RNA and DNA duplex-unwinding activities with 5' to 3' polarity. Activity of helicase is dependent on magnesium. Functionally, plays a role in viral RNA synthesis through two distinct activities. The N7-guanine methyltransferase activity plays a role in the formation of the cap structure GpppA-RNA. The proofreading exoribonuclease reduces the sensitivity of the virus to RNA mutagens during replication. This activity acts on both ssRNA and dsRNA in a 3'-5' direction. In terms of biological role, plays a role in viral transcription/replication and prevents the simultaneous activation of host cell dsRNA sensors, such as MDA5/IFIH1, OAS, and PKR. Acts by degrading the 5'-polyuridines generated during replication of the poly(A) region of viral genomic and subgenomic RNAs. Catalyzes a two-step reaction in which a 2'3'-cyclic phosphate (2'3'-cP) is first generated by 2'-O transesterification, which is then hydrolyzed to a 3'-phosphate (3'-P). If not degraded, poly(U) RNA would hybridize with poly(A) RNA tails and activate host dsRNA sensors. Methyltransferase that mediates mRNA cap 2'-O-ribose methylation to the 5'-cap structure of viral mRNAs. N7-methyl guanosine cap is a prerequisite for binding of nsp16. Therefore plays an essential role in viral mRNAs cap methylation which is essential to evade immune system. In Bat coronavirus 133/2005 (BtCoV), this protein is Replicase polyprotein 1ab (rep).